Consider the following 425-residue polypeptide: 3-phosphoshikimate 1-carboxyvinyltransferase (425 aa).

Residues lysine 22, serine 23, and arginine 27 each coordinate 3-phosphoshikimate. Phosphoenolpyruvate is bound at residue lysine 22. 2 residues coordinate phosphoenolpyruvate: glycine 95 and arginine 123. Serine 169, serine 170, glutamine 171, serine 197, aspartate 313, asparagine 336, and lysine 340 together coordinate 3-phosphoshikimate. Glutamine 171 contacts phosphoenolpyruvate. Aspartate 313 acts as the Proton acceptor in catalysis. 3 residues coordinate phosphoenolpyruvate: arginine 344, arginine 386, and lysine 411.

Belongs to the EPSP synthase family. As to quaternary structure, monomer.

It localises to the cytoplasm. The enzyme catalyses 3-phosphoshikimate + phosphoenolpyruvate = 5-O-(1-carboxyvinyl)-3-phosphoshikimate + phosphate. Its pathway is metabolic intermediate biosynthesis; chorismate biosynthesis; chorismate from D-erythrose 4-phosphate and phosphoenolpyruvate: step 6/7. In terms of biological role, catalyzes the transfer of the enolpyruvyl moiety of phosphoenolpyruvate (PEP) to the 5-hydroxyl of shikimate-3-phosphate (S3P) to produce enolpyruvyl shikimate-3-phosphate and inorganic phosphate. This Pseudoalteromonas translucida (strain TAC 125) protein is 3-phosphoshikimate 1-carboxyvinyltransferase.